The following is a 340-amino-acid chain: Glycerol-3-phosphate dehydrogenase [NAD(P)+] (340 aa).

Residues Ser-11, Trp-12, Arg-33, and Lys-106 each contribute to the NADPH site. Sn-glycerol 3-phosphate-binding residues include Lys-106, Gly-137, and Ser-139. Ala-141 is an NADPH binding site. 5 residues coordinate sn-glycerol 3-phosphate: Lys-192, Asp-245, Ser-255, Arg-256, and Asn-257. The active-site Proton acceptor is the Lys-192. Arg-256 contributes to the NADPH binding site. Positions 280 and 282 each coordinate NADPH.

Belongs to the NAD-dependent glycerol-3-phosphate dehydrogenase family.

Its subcellular location is the cytoplasm. It catalyses the reaction sn-glycerol 3-phosphate + NAD(+) = dihydroxyacetone phosphate + NADH + H(+). It carries out the reaction sn-glycerol 3-phosphate + NADP(+) = dihydroxyacetone phosphate + NADPH + H(+). It functions in the pathway membrane lipid metabolism; glycerophospholipid metabolism. Its function is as follows. Catalyzes the reduction of the glycolytic intermediate dihydroxyacetone phosphate (DHAP) to sn-glycerol 3-phosphate (G3P), the key precursor for phospholipid synthesis. This Bacillus mycoides (strain KBAB4) (Bacillus weihenstephanensis) protein is Glycerol-3-phosphate dehydrogenase [NAD(P)+].